Reading from the N-terminus, the 305-residue chain is GMP synthase [glutamine-hydrolyzing] subunit B (305 aa).

One can recognise a GMPS ATP-PPase domain in the interval 2 to 185 (VNVDEFIEEA…LDLEEIISER (184 aa)). 29–35 (SGGVDSS) provides a ligand contact to ATP.

In terms of assembly, heterodimer composed of a glutamine amidotransferase subunit (A) and a GMP-binding subunit (B).

The enzyme catalyses XMP + L-glutamine + ATP + H2O = GMP + L-glutamate + AMP + diphosphate + 2 H(+). It participates in purine metabolism; GMP biosynthesis; GMP from XMP (L-Gln route): step 1/1. Its function is as follows. Catalyzes the synthesis of GMP from XMP. This is GMP synthase [glutamine-hydrolyzing] subunit B from Haloarcula marismortui (strain ATCC 43049 / DSM 3752 / JCM 8966 / VKM B-1809) (Halobacterium marismortui).